We begin with the raw amino-acid sequence, 145 residues long: Large ribosomal subunit protein uL13 (145 aa).

This sequence belongs to the universal ribosomal protein uL13 family. In terms of assembly, part of the 50S ribosomal subunit.

This protein is one of the early assembly proteins of the 50S ribosomal subunit, although it is not seen to bind rRNA by itself. It is important during the early stages of 50S assembly. The chain is Large ribosomal subunit protein uL13 from Staphylococcus epidermidis (strain ATCC 35984 / DSM 28319 / BCRC 17069 / CCUG 31568 / BM 3577 / RP62A).